Consider the following 458-residue polypeptide: Exodeoxyribonuclease 7 large subunit (458 aa).

It belongs to the XseA family. In terms of assembly, heterooligomer composed of large and small subunits.

It localises to the cytoplasm. The catalysed reaction is Exonucleolytic cleavage in either 5'- to 3'- or 3'- to 5'-direction to yield nucleoside 5'-phosphates.. In terms of biological role, bidirectionally degrades single-stranded DNA into large acid-insoluble oligonucleotides, which are then degraded further into small acid-soluble oligonucleotides. This chain is Exodeoxyribonuclease 7 large subunit, found in Shouchella clausii (strain KSM-K16) (Alkalihalobacillus clausii).